Consider the following 232-residue polypeptide: DASH complex subunit DUO1 (232 aa).

2 disordered regions span residues 1 to 44 (MADE…GGMR) and 133 to 232 (ERRR…RGAK). Residues 128 to 171 (ELEAEERRRQEEVERRAAEAERRREEARRKAEEEERRRAAAAAA) are a coiled coil. Over residues 133 to 165 (ERRRQEEVERRAAEAERRREEARRKAEEEERRR) the composition is skewed to basic and acidic residues. Composition is skewed to low complexity over residues 167–183 (AAAAAAAAPAGRSVGRG) and 191–213 (GSGLTRGASSSASGSETTRTTSG).

Belongs to the DASH complex DUO1 family. In terms of assembly, component of the DASH complex consisting of ASK1, DAD1, DAD2, DAD3, DAD4, DAM1, DUO1, HSK3, SPC19 and SPC34, with a stoichiometry of one copy of each subunit per complex. Multiple DASH complexes oligomerize to form a ring that encircles spindle microtubules and organizes the rod-like NDC80 complexes of the outer kinetochore. DASH complex oligomerization strengthens microtubule attachments. On cytoplasmic microtubules, DASH complexes appear to form patches instead of rings.

Its subcellular location is the nucleus. The protein resides in the cytoplasm. The protein localises to the cytoskeleton. It localises to the spindle pole. It is found in the chromosome. Its subcellular location is the centromere. The protein resides in the kinetochore. Functionally, component of the DASH complex that connects microtubules with kinetochores and couples microtubule depolymerisation to chromosome movement; it is involved in retrieving kinetochores to the spindle poles before their re-orientation on the spindle in early mitosis and allows microtubule depolymerization to pull chromosomes apart and resist detachment during anaphase. Kinetochores, consisting of a centromere-associated inner segment and a microtubule-contacting outer segment, play a crucial role in chromosome segregation by mediating the physical connection between centromeric DNA and microtubules. Kinetochores also serve as an input point for the spindle assembly checkpoint, which delays anaphase until all chromosomes have bioriented on the mitotic spindle. This chain is DASH complex subunit DUO1, found in Chaetomium thermophilum (strain DSM 1495 / CBS 144.50 / IMI 039719) (Thermochaetoides thermophila).